Reading from the N-terminus, the 456-residue chain is Gamma-glutamyl phosphate reductase (456 aa).

Ser-2 carries the post-translational modification N-acetylserine.

It belongs to the gamma-glutamyl phosphate reductase family.

It carries out the reaction L-glutamate 5-semialdehyde + phosphate + NADP(+) = L-glutamyl 5-phosphate + NADPH + H(+). It participates in amino-acid biosynthesis; L-proline biosynthesis; L-glutamate 5-semialdehyde from L-glutamate: step 2/2. In terms of biological role, catalyzes the NADPH dependent reduction of L-gamma-glutamyl 5-phosphate into L-glutamate 5-semialdehyde and phosphate. The product spontaneously undergoes cyclization to form 1-pyrroline-5-carboxylate. The protein is Gamma-glutamyl phosphate reductase (PRO2) of Saccharomyces cerevisiae (strain ATCC 204508 / S288c) (Baker's yeast).